The chain runs to 446 residues: Phosphoglucosamine mutase (446 aa).

The active-site Phosphoserine intermediate is S100. S100, D239, D241, and D243 together coordinate Mg(2+). S100 is subject to Phosphoserine.

The protein belongs to the phosphohexose mutase family. The cofactor is Mg(2+). Post-translationally, activated by phosphorylation.

The catalysed reaction is alpha-D-glucosamine 1-phosphate = D-glucosamine 6-phosphate. Functionally, catalyzes the conversion of glucosamine-6-phosphate to glucosamine-1-phosphate. The polypeptide is Phosphoglucosamine mutase (Shouchella clausii (strain KSM-K16) (Alkalihalobacillus clausii)).